The primary structure comprises 187 residues: UPF0340 protein SMU_87 (187 aa).

It belongs to the UPF0340 family.

The sequence is that of UPF0340 protein SMU_87 from Streptococcus mutans serotype c (strain ATCC 700610 / UA159).